The following is a 382-amino-acid chain: Anhydro-N-acetylmuramic acid kinase (382 aa).

22-29 (GTSMDGVD) contributes to the ATP binding site.

This sequence belongs to the anhydro-N-acetylmuramic acid kinase family.

The enzyme catalyses 1,6-anhydro-N-acetyl-beta-muramate + ATP + H2O = N-acetyl-D-muramate 6-phosphate + ADP + H(+). Its pathway is amino-sugar metabolism; 1,6-anhydro-N-acetylmuramate degradation. It functions in the pathway cell wall biogenesis; peptidoglycan recycling. Functionally, catalyzes the specific phosphorylation of 1,6-anhydro-N-acetylmuramic acid (anhMurNAc) with the simultaneous cleavage of the 1,6-anhydro ring, generating MurNAc-6-P. Is required for the utilization of anhMurNAc either imported from the medium or derived from its own cell wall murein, and thus plays a role in cell wall recycling. The polypeptide is Anhydro-N-acetylmuramic acid kinase (Burkholderia cenocepacia (strain ATCC BAA-245 / DSM 16553 / LMG 16656 / NCTC 13227 / J2315 / CF5610) (Burkholderia cepacia (strain J2315))).